A 123-amino-acid polypeptide reads, in one-letter code: Chondroitin proteoglycan 8 (123 aa).

Residues 1-16 (MRPFILLALLFSVAIA) form the signal peptide. A disordered region spans residues 32 to 123 (SVRRSTRGAD…SGSGDEAPAE (92 aa)). Residues 38-60 (RGADKKADSSDSSDSNEKDDKVT) show a composition bias toward basic and acidic residues. 2 O-linked (Xyl...) (chondroitin sulfate) serine glycosylation sites follow: serine 63 and serine 65. Positions 74–84 (EQLRRVARDVE) are enriched in basic and acidic residues. O-linked (Xyl...) (chondroitin sulfate) serine glycosylation is found at serine 87, serine 93, and serine 114.

This Caenorhabditis briggsae protein is Chondroitin proteoglycan 8 (cpg-8).